Here is a 695-residue protein sequence, read N- to C-terminus: Lactotransferrin (695 aa).

A signal peptide spans 1–6 (LGLCLA). Transferrin-like domains lie at 12 to 339 (VRWC…NLRE) and 351 to 680 (VVWC…NLRR). 2 disulfide bridges follow: Cys-15–Cys-51 and Cys-25–Cys-42. Asp-66 is a binding site for Fe(3+). Lys-79 is an active-site residue. Tyr-98 serves as a coordination point for Fe(3+). 5 disulfide bridges follow: Cys-121-Cys-204, Cys-163-Cys-179, Cys-166-Cys-189, Cys-176-Cys-187, and Cys-237-Cys-251. Hydrogencarbonate is bound by residues Thr-123, Arg-127, Ala-129, and Gly-130. A glycan (N-linked (GlcNAc...) asparagine) is linked at Asn-143. Tyr-198 is a Fe(3+) binding site. Residue His-259 participates in Fe(3+) binding. The Nucleophile role is filled by Ser-265. Asn-287 carries N-linked (GlcNAc...) asparagine glycosylation. 2 disulfides stabilise this stretch: Cys-354–Cys-386 and Cys-364–Cys-377. Residue Asp-401 participates in Fe(3+) binding. Intrachain disulfides connect Cys-411/Cys-690, Cys-431/Cys-653, Cys-463/Cys-538, Cys-487/Cys-681, Cys-497/Cys-511, Cys-508/Cys-521, Cys-579/Cys-593, and Cys-631/Cys-636. Pro-436 contacts D-glucose. Tyr-439 is a binding site for Fe(3+). The hydrogencarbonate site is built by Thr-465, Arg-469, Ala-471, and Ala-472. The N-linked (GlcNAc...) asparagine glycan is linked to Asn-482. Residue Tyr-532 coordinates Fe(3+). Asn-600 provides a ligand contact to D-glucose. His-601 serves as a coordination point for Fe(3+). Residue Tyr-666 participates in D-glucose binding.

Belongs to the transferrin family. In terms of assembly, monomer. Found in a complex with LTF, CLU, EPPIN and SEMG1. Found in a complex with MPO and LTF; interacts directly with CP, allows Fe(3+) incorporation into LTF and activation of CP ferroxidase activity. In terms of processing, poly-N-acetyllactosaminic carbohydrate moiety seems to be needed for TLR4 activation.

It localises to the secreted. The protein localises to the cytoplasmic granule. In terms of biological role, transferrins are iron binding transport proteins which can bind two Fe(3+) ions in association with the binding of an anion, usually bicarbonate. Functionally, major iron-binding and multifunctional protein found in exocrine fluids such as breast milk and mucosal secretions. Has antimicrobial activity, which depends on the extracellular cation concentration. Antimicrobial properties include bacteriostasis, which is related to its ability to sequester free iron and thus inhibit microbial growth, as well as direct bactericidal properties leading to the release of lipopolysaccharides from the bacterial outer membrane. Can also prevent bacterial biofilm development in P.aeruginosa infection. Has weak antifungal activity against C.albicans. Has anabolic, differentiating and anti-apoptotic effects on osteoblasts and can also inhibit osteoclastogenesis, possibly playing a role in the regulation of bone growth. Promotes binding of species C adenoviruses to epithelial cells, promoting adenovirus infection. Can inhibit papillomavirus infections. Stimulates the TLR4 signaling pathway leading to NF-kappa-B activation and subsequent pro-inflammatory cytokine production while also interfering with the lipopolysaccharide (LPS)-stimulated TLR4 signaling. Inhibits neutrophil granulocyte migration to sites of apoptosis, when secreted by apoptotic cells. Stimulates VEGFA-mediated endothelial cell migration and proliferation. Binds heparin, chondroitin sulfate and possibly other glycosaminoglycans (GAGs). Also binds specifically to pneumococcal surface protein A (PspA), the lipid A portion of bacterial lipopolysaccharide (LPS), lysozyme and DNA. Lactoferricin binds to the bacterial surface and is crucial for the bactericidal functions. Has some antiviral activity against papillomavirus infection. N-terminal region shows strong antifungal activity against C.albicans. Contains two BBXB heparin-binding consensus sequences that appear to form the predominate functional GAG-binding site. Its function is as follows. The lactotransferrin transferrin-like domain 1 functions as a serine protease of the peptidase S60 family that cuts arginine rich regions. This function contributes to the antimicrobial activity. Shows a preferential cleavage at -Arg-Ser-Arg-Arg-|- and -Arg-Arg-Ser-Arg-|-, and of Z-Phe-Arg-|-aminomethylcoumarin sites. This chain is Lactotransferrin (LTF), found in Equus caballus (Horse).